A 140-amino-acid polypeptide reads, in one-letter code: Putative pre-16S rRNA nuclease (140 aa).

The protein belongs to the YqgF nuclease family.

It localises to the cytoplasm. Could be a nuclease involved in processing of the 5'-end of pre-16S rRNA. This Edwardsiella ictaluri (strain 93-146) protein is Putative pre-16S rRNA nuclease.